The following is a 55-amino-acid chain: AYKITDECIACGSCADQCPVEAISEGSIYEIDEALCTDCGACADQCPVEAIVPED.

4Fe-4S ferredoxin-type domains lie at 2-26 and 27-55; these read YKIT…ISEG and SIYE…VPED. [4Fe-4S] cluster-binding residues include C8, C11, C14, C18, C36, C39, C42, and C46.

The cofactor is [4Fe-4S] cluster.

Functionally, ferredoxins are iron-sulfur proteins that transfer electrons in a wide variety of metabolic reactions. The protein is Ferredoxin of Butyribacterium methylotrophicum.